The primary structure comprises 310 residues: Putative S-adenosyl-L-methionine-dependent methyltransferase MAP_2076c (310 aa).

S-adenosyl-L-methionine is bound by residues aspartate 131 and 160 to 161; that span reads DL.

The protein belongs to the UPF0677 family.

Functionally, exhibits S-adenosyl-L-methionine-dependent methyltransferase activity. The sequence is that of Putative S-adenosyl-L-methionine-dependent methyltransferase MAP_2076c from Mycolicibacterium paratuberculosis (strain ATCC BAA-968 / K-10) (Mycobacterium paratuberculosis).